A 659-amino-acid polypeptide reads, in one-letter code: Alpha-amylase (659 aa).

Positions 1 to 27 are cleaved as a signal peptide; the sequence is MFAKRFKTSLLPLFAGFLLLFHLVLAG. A propeptide spanning residues 28–41 is cleaved from the precursor; the sequence is PAAASAETANKSNE. Residues N142, T178, D187, G210, and D212 each coordinate Ca(2+). The active-site Nucleophile is the D217. H221 serves as a coordination point for Ca(2+). E249 (proton donor) is an active-site residue.

The protein belongs to the glycosyl hydrolase 13 family. Monomer. The cofactor is Ca(2+).

It localises to the secreted. The enzyme catalyses Endohydrolysis of (1-&gt;4)-alpha-D-glucosidic linkages in polysaccharides containing three or more (1-&gt;4)-alpha-linked D-glucose units.. This chain is Alpha-amylase (amyE), found in Bacillus subtilis (strain 168).